Reading from the N-terminus, the 132-residue chain is Small ribosomal subunit protein uS8 (132 aa).

This sequence belongs to the universal ribosomal protein uS8 family. Part of the 30S ribosomal subunit. Contacts proteins S5 and S12.

Its function is as follows. One of the primary rRNA binding proteins, it binds directly to 16S rRNA central domain where it helps coordinate assembly of the platform of the 30S subunit. This is Small ribosomal subunit protein uS8 from Exiguobacterium sp. (strain ATCC BAA-1283 / AT1b).